Consider the following 367-residue polypeptide: Cell-death-related nuclease 7 (367 aa).

The signal sequence occupies residues 1–18 (MRLYFVLIFSVIFTTGNG). N-linked (GlcNAc...) asparagine glycosylation is present at Asn-253.

The protein belongs to the DNase II family.

This Caenorhabditis elegans protein is Cell-death-related nuclease 7 (crn-7).